We begin with the raw amino-acid sequence, 104 residues long: L-rhamnose mutarotase (104 aa).

Tyr18 lines the substrate pocket. The active-site Proton donor is the His22. Residues Tyr41 and 76–77 (WW) each bind substrate.

This sequence belongs to the rhamnose mutarotase family. Homodimer.

It localises to the cytoplasm. It catalyses the reaction alpha-L-rhamnose = beta-L-rhamnose. It participates in carbohydrate metabolism; L-rhamnose metabolism. Involved in the anomeric conversion of L-rhamnose. The sequence is that of L-rhamnose mutarotase from Escherichia coli O1:K1 / APEC.